The primary structure comprises 130 residues: S-adenosylmethionine decarboxylase proenzyme (130 aa).

The active-site Schiff-base intermediate with substrate; via pyruvic acid is the Ser-64. The residue at position 64 (Ser-64) is a Pyruvic acid (Ser); by autocatalysis. His-69 acts as the Proton acceptor; for processing activity in catalysis. Catalysis depends on Cys-84, which acts as the Proton donor; for catalytic activity.

The protein belongs to the prokaryotic AdoMetDC family. Type 1 subfamily. Heterotetramer of two alpha and two beta chains arranged as a dimer of alpha/beta heterodimers. It depends on pyruvate as a cofactor. In terms of processing, is synthesized initially as an inactive proenzyme. Formation of the active enzyme involves a self-maturation process in which the active site pyruvoyl group is generated from an internal serine residue via an autocatalytic post-translational modification. Two non-identical subunits are generated from the proenzyme in this reaction, and the pyruvate is formed at the N-terminus of the alpha chain, which is derived from the carboxyl end of the proenzyme. The post-translation cleavage follows an unusual pathway, termed non-hydrolytic serinolysis, in which the side chain hydroxyl group of the serine supplies its oxygen atom to form the C-terminus of the beta chain, while the remainder of the serine residue undergoes an oxidative deamination to produce ammonia and the pyruvoyl group blocking the N-terminus of the alpha chain.

It catalyses the reaction S-adenosyl-L-methionine + H(+) = S-adenosyl 3-(methylsulfanyl)propylamine + CO2. The protein operates within amine and polyamine biosynthesis; S-adenosylmethioninamine biosynthesis; S-adenosylmethioninamine from S-adenosyl-L-methionine: step 1/1. Catalyzes the decarboxylation of S-adenosylmethionine to S-adenosylmethioninamine (dcAdoMet), the propylamine donor required for the synthesis of the polyamines spermine and spermidine from the diamine putrescine. The protein is S-adenosylmethionine decarboxylase proenzyme of Thermoplasma volcanium (strain ATCC 51530 / DSM 4299 / JCM 9571 / NBRC 15438 / GSS1).